Here is a 623-residue protein sequence, read N- to C-terminus: tRNA uridine 5-carboxymethylaminomethyl modification enzyme MnmG (623 aa).

12 to 17 contacts FAD; the sequence is GAGHAG. Residue 272–286 participates in NAD(+) binding; it reads GPRYCPSIEDKINRF.

It belongs to the MnmG family. In terms of assembly, homodimer. Heterotetramer of two MnmE and two MnmG subunits. FAD is required as a cofactor.

Its subcellular location is the cytoplasm. NAD-binding protein involved in the addition of a carboxymethylaminomethyl (cmnm) group at the wobble position (U34) of certain tRNAs, forming tRNA-cmnm(5)s(2)U34. The polypeptide is tRNA uridine 5-carboxymethylaminomethyl modification enzyme MnmG (Flavobacterium psychrophilum (strain ATCC 49511 / DSM 21280 / CIP 103535 / JIP02/86)).